Consider the following 213-residue polypeptide: Nicolin-1 (213 aa).

As to quaternary structure, part of the neuronal tubulin polyglutamylase complex which contains TPGS1, TPGS2, TTLL1, LRRC49 and NICN1. In terms of tissue distribution, high expression level is found in brain, testis, liver and kidney. Weak expression in spleen, leukocytes, small intestin and colon.

It is found in the nucleus. The chain is Nicolin-1 (Nicn1) from Mus musculus (Mouse).